The following is a 198-amino-acid chain: MQLKRVAEAKLPTPWGDFLMVGFEELATGHDHVALVFGDISGQTPVLARVHSECLTGDALFSLRCDCGFQLEAALTHIAEEGRGILLYHRQEGRNIGLLNKIRAYALQDQGYDTVEANHQLGFAADERDFTLCADMFKLLGVDAVRLLTNNPKKVEILTEAGINIVERVPLIVGRNPKNAHYLDTKAAKMGHLLGKTE.

A GTP-binding site is contributed by 49-53 (RVHSE). Positions 54, 65, and 67 each coordinate Zn(2+). Residues Gln70, 92–94 (EGR), and Thr114 each bind GTP. The active-site Proton acceptor is Asp126. The Nucleophile role is filled by Arg128. GTP contacts are provided by Thr149 and Lys154.

This sequence belongs to the GTP cyclohydrolase II family. In terms of assembly, homodimer. Zn(2+) serves as cofactor.

It carries out the reaction GTP + 4 H2O = 2,5-diamino-6-hydroxy-4-(5-phosphoribosylamino)-pyrimidine + formate + 2 phosphate + 3 H(+). The protein operates within cofactor biosynthesis; riboflavin biosynthesis; 5-amino-6-(D-ribitylamino)uracil from GTP: step 1/4. Functionally, catalyzes the conversion of GTP to 2,5-diamino-6-ribosylamino-4(3H)-pyrimidinone 5'-phosphate (DARP), formate and pyrophosphate. The sequence is that of GTP cyclohydrolase-2 from Escherichia fergusonii (strain ATCC 35469 / DSM 13698 / CCUG 18766 / IAM 14443 / JCM 21226 / LMG 7866 / NBRC 102419 / NCTC 12128 / CDC 0568-73).